A 909-amino-acid polypeptide reads, in one-letter code: Protein translocase subunit SecA (909 aa).

Residues glutamine 87 and 105-109 (GEGKT) each bind ATP. A disordered region spans residues 246–265 (LEQQEKEDEEGKNGDGDYTI). The segment covering 254-265 (EEGKNGDGDYTI) has biased composition (basic and acidic residues). Aspartate 512 contributes to the ATP binding site. The segment covering 834–858 (ESDVEAVEEQRRQADEQPKQYEHET) has biased composition (basic and acidic residues). Residues 834 to 899 (ESDVEAVEEQ…NDPCPCGSGL (66 aa)) are disordered. Residues 859 to 875 (ASATQAPEQAPEAAPAA) are compositionally biased toward low complexity. Positions 893, 895, 904, and 905 each coordinate Zn(2+).

It belongs to the SecA family. In terms of assembly, monomer and homodimer. Part of the essential Sec protein translocation apparatus which comprises SecA, SecYEG and auxiliary proteins SecDF-YajC and YidC. It depends on Zn(2+) as a cofactor.

Its subcellular location is the cell inner membrane. The protein resides in the cytoplasm. The catalysed reaction is ATP + H2O + cellular proteinSide 1 = ADP + phosphate + cellular proteinSide 2.. Its function is as follows. Part of the Sec protein translocase complex. Interacts with the SecYEG preprotein conducting channel. Has a central role in coupling the hydrolysis of ATP to the transfer of proteins into and across the cell membrane, serving both as a receptor for the preprotein-SecB complex and as an ATP-driven molecular motor driving the stepwise translocation of polypeptide chains across the membrane. This is Protein translocase subunit SecA from Pseudoalteromonas atlantica (strain T6c / ATCC BAA-1087).